A 253-amino-acid chain; its full sequence is Imidazole glycerol phosphate synthase subunit HisF (253 aa).

Active-site residues include D11 and D130.

This sequence belongs to the HisA/HisF family. In terms of assembly, heterodimer of HisH and HisF.

The protein localises to the cytoplasm. The enzyme catalyses 5-[(5-phospho-1-deoxy-D-ribulos-1-ylimino)methylamino]-1-(5-phospho-beta-D-ribosyl)imidazole-4-carboxamide + L-glutamine = D-erythro-1-(imidazol-4-yl)glycerol 3-phosphate + 5-amino-1-(5-phospho-beta-D-ribosyl)imidazole-4-carboxamide + L-glutamate + H(+). Its pathway is amino-acid biosynthesis; L-histidine biosynthesis; L-histidine from 5-phospho-alpha-D-ribose 1-diphosphate: step 5/9. Its function is as follows. IGPS catalyzes the conversion of PRFAR and glutamine to IGP, AICAR and glutamate. The HisF subunit catalyzes the cyclization activity that produces IGP and AICAR from PRFAR using the ammonia provided by the HisH subunit. This Dehalococcoides mccartyi (strain ATCC BAA-2266 / KCTC 15142 / 195) (Dehalococcoides ethenogenes (strain 195)) protein is Imidazole glycerol phosphate synthase subunit HisF.